We begin with the raw amino-acid sequence, 570 residues long: Guanine nucleotide-binding protein alpha-3 subunit (570 aa).

Residues 10 to 113 enclose the PH domain; it reads RETLRAYLSK…WIEAIKHAIE (104 aa). The G-alpha domain occupies 144 to 570; the sequence is PVLKLLLLGT…IISKTLEFYC (427 aa). The segment at 147-160 is G1 motif; sequence KLLLLGTGESGKST. 152–159 is a binding site for GTP; it reads GTGESGKS. Mg(2+) is bound at residue Ser-159. 2 stretches are compositionally biased toward low complexity: residues 254–272 and 290–316; these read NNNSNSSSLKNNSGGSSSS and NSNSASPNGPSSSTTTSTINTHNRSNS. The disordered stretch occupies residues 254 to 321; the sequence is NNNSNSSSLK…NRSNSDGSSN (68 aa). The G2 motif stretch occupies residues 386-394; it reads DILKSRATT. GTP-binding positions include 388 to 394, 414 to 418, 483 to 486, and Ala-544; these read LKSRATT, DVAGQ, and NKID. Thr-394 contributes to the Mg(2+) binding site. The interval 410 to 419 is G3 motif; that stretch reads FRIVDVAGQR. The G4 motif stretch occupies residues 479–486; it reads ILFLNKID. The interval 542–547 is G5 motif; sequence TCATDT.

This sequence belongs to the G-alpha family. As to quaternary structure, g proteins are composed of 3 units; alpha, beta and gamma. The alpha chain contains the guanine nucleotide binding site.

Guanine nucleotide-binding proteins (G proteins) are involved as modulators or transducers in various transmembrane signaling systems. G alpha-3 plays a role in development. G alpha-3 mutants fail to aggregate. The chain is Guanine nucleotide-binding protein alpha-3 subunit (gpaC) from Dictyostelium discoideum (Social amoeba).